Consider the following 683-residue polypeptide: Inositol-trisphosphate 3-kinase C (683 aa).

The disordered stretch occupies residues 1 to 124; the sequence is MRRCPCRGSL…PDRSSLRTHL (124 aa). Residues 13–22 are compositionally biased toward low complexity; that stretch reads AEAGALPAAA. Residues 44 to 58 show a composition bias toward gly residues; that stretch reads PGAGAPAGRPEGGGP. A compositionally biased stretch (basic and acidic residues) spans 105–124; that stretch reads ETERPKQKTEPDRSSLRTHL. 2 positions are modified to phosphoserine: Ser127 and Ser162. The disordered stretch occupies residues 147-308; the sequence is TDPHRSDLQF…EDGPLEEPEP (162 aa). The segment covering 196 to 206 has biased composition (polar residues); that stretch reads WTHQNSSSLQT. A compositionally biased stretch (basic and acidic residues) spans 249–259; sequence SQKKQDTEAAR. A compositionally biased stretch (polar residues) spans 267–289; sequence FQIQQDTDGSWTQPSTDGSQTAP. Acidic residues predominate over residues 297–308; it reads EPEDGPLEEPEP. Residues 324–332 carry the Nuclear export signal motif; the sequence is LCPVPRLII. The interval 334 to 387 is disordered; the sequence is PETPEPEAQPVGPPSRVEGGSGGFSSASSFDESEDDVVAGGGGASDPEDRSGSK. Residue Thr336 is modified to Phosphothreonine. Phosphoserine is present on Ser404. ATP contacts are provided by residues Lys431, 471–473, and Asp484; that span reads EDL. Residues Lys486, 507 to 513, and 534 to 541 contribute to the substrate site; these read RKDMYEK and KPRYMQWR. Residues 509-517 form a calmodulin-binding region; it reads DMYEKMVAV. Residues Lys558 and Asp638 each contribute to the ATP site. Lys641 is a binding site for substrate.

The protein belongs to the inositol phosphokinase (IPK) family. As to expression, highly expressed in pancreas, skeletal muscle, liver, placenta and weakly in kidney and brain.

It is found in the nucleus. It localises to the cytoplasm. It carries out the reaction 1D-myo-inositol 1,4,5-trisphosphate + ATP = 1D-myo-inositol 1,3,4,5-tetrakisphosphate + ADP + H(+). With respect to regulation, activated by calcium/calmodulin. Inhibited by high concentrations of the substrate Ins(1,2,4)P3, and allosterically activated by the product Ins(1,3,4,5)P4. In terms of biological role, catalyzes the phosphorylation of 1D-myo-inositol 1,4,5-trisphosphate (InsP3) into 1D-myo-inositol 1,3,4,5-tetrakisphosphate and participates to the regulation of calcium homeostasis. Can phosphorylate inositol 2,4,5-triphosphate to inositol 2,4,5,6-tetraphosphate. The protein is Inositol-trisphosphate 3-kinase C of Homo sapiens (Human).